Here is an 846-residue protein sequence, read N- to C-terminus: Disks large-associated protein 5 (846 aa).

Ser-67 carries the post-translational modification Phosphoserine; by CDK1. Positions 90–120 (RKQMLQKYKEEKQLQKLKEQREKAKRGIFKV) form a coiled coil. The segment at 153-284 (TRSKAKDQME…TNATSGMNPD (132 aa)) is disordered. Basic and acidic residues-rich tracts occupy residues 156–174 (KAKD…DVRA) and 182–194 (TSEK…EKKV). A Phosphoserine modification is found at Ser-202. The span at 203–225 (LRMTRSATQAAKQVPRTVSSTTA) shows a compositional bias: polar residues. Basic and acidic residues predominate over residues 250 to 266 (KNVETKPDKGISCKVDS). The span at 269–281 (NTLNSQTNATSGM) shows a compositional bias: polar residues. Thr-326 is subject to Phosphothreonine. A Phosphothreonine; by CDK1 modification is found at Thr-329. Position 338 is a phosphothreonine (Thr-338). Residue Lys-347 forms a Glycyl lysine isopeptide (Lys-Gly) (interchain with G-Cter in SUMO2) linkage. Phosphothreonine; by CDK1 is present on residues Thr-401 and Thr-402. Ser-618 is subject to Phosphoserine; by CDK1. Ser-627 is modified (phosphoserine; by AURKA). Over residues 628–671 (VSSEGPSQRLGTPKSVNKAVSQSRNEMGIPQQTTSPENAGPQNT) the composition is skewed to polar residues. The interval 628 to 674 (VSSEGPSQRLGTPKSVNKAVSQSRNEMGIPQQTTSPENAGPQNTKSE) is disordered. 2 positions are modified to phosphoserine: Ser-629 and Ser-634. Thr-639 is subject to Phosphothreonine; by CDK1. Ser-642 is modified (phosphoserine; by CDK1). Ser-662 bears the Phosphoserine mark. Ser-725 and Ser-757 each carry phosphoserine; by AURKA. Residue Thr-759 is modified to Phosphothreonine; by CDK1. A phosphoserine mark is found at Ser-774 and Ser-777. Thr-784 carries the phosphothreonine modification. Phosphoserine occurs at positions 806 and 812. The residue at position 830 (Ser-830) is a Phosphoserine; by AURKA. Phosphoserine; by CDK1 is present on Ser-839.

Belongs to the SAPAP family. In terms of assembly, interacts with CDK1. Interacts with the C-terminal proline-rich region of FBXO7. Recruited by FBXO7 to a SCF (SKP1-CUL1-F-box) protein complex in a CDK1/Cyclin B-phosphorylation dependent manner. Interacts with CDH1. In terms of processing, ubiquitinated, leading to its degradation. Post-translationally, decreased phosphorylation levels are associated with the differentiation of intestinal epithelial cells. In terms of tissue distribution, abundantly expressed in fetal liver. Expressed at lower levels in bone marrow, testis, colon, and placenta.

Its subcellular location is the nucleus. It localises to the cytoplasm. The protein localises to the cytoskeleton. The protein resides in the spindle. In terms of biological role, potential cell cycle regulator that may play a role in carcinogenesis of cancer cells. Mitotic phosphoprotein regulated by the ubiquitin-proteasome pathway. Key regulator of adherens junction integrity and differentiation that may be involved in CDH1-mediated adhesion and signaling in epithelial cells. The sequence is that of Disks large-associated protein 5 (DLGAP5) from Homo sapiens (Human).